Consider the following 236-residue polypeptide: 2,3,4,5-tetrahydropyridine-2,6-dicarboxylate N-acetyltransferase (236 aa).

Belongs to the transferase hexapeptide repeat family. DapH subfamily.

It carries out the reaction (S)-2,3,4,5-tetrahydrodipicolinate + acetyl-CoA + H2O = L-2-acetamido-6-oxoheptanedioate + CoA. It functions in the pathway amino-acid biosynthesis; L-lysine biosynthesis via DAP pathway; LL-2,6-diaminopimelate from (S)-tetrahydrodipicolinate (acetylase route): step 1/3. Catalyzes the transfer of an acetyl group from acetyl-CoA to tetrahydrodipicolinate. The polypeptide is 2,3,4,5-tetrahydropyridine-2,6-dicarboxylate N-acetyltransferase (Bacillus velezensis (strain DSM 23117 / BGSC 10A6 / LMG 26770 / FZB42) (Bacillus amyloliquefaciens subsp. plantarum)).